We begin with the raw amino-acid sequence, 175 residues long: Chorismate pyruvate-lyase (175 aa).

4 residues coordinate substrate: M36, R78, L116, and E157.

It belongs to the UbiC family. As to quaternary structure, monomer.

Its subcellular location is the cytoplasm. It carries out the reaction chorismate = 4-hydroxybenzoate + pyruvate. It functions in the pathway cofactor biosynthesis; ubiquinone biosynthesis. Its function is as follows. Removes the pyruvyl group from chorismate, with concomitant aromatization of the ring, to provide 4-hydroxybenzoate (4HB) for the ubiquinone pathway. This Hamiltonella defensa subsp. Acyrthosiphon pisum (strain 5AT) protein is Chorismate pyruvate-lyase.